The chain runs to 365 residues: Sulfate/thiosulfate import ATP-binding protein CysA (365 aa).

Positions 3 to 237 constitute an ABC transporter domain; it reads IEIANIKKSF…PATRFVLEFM (235 aa). 35–42 provides a ligand contact to ATP; the sequence is GPSGSGKT.

The protein belongs to the ABC transporter superfamily. Sulfate/tungstate importer (TC 3.A.1.6) family. In terms of assembly, the complex is composed of two ATP-binding proteins (CysA), two transmembrane proteins (CysT and CysW) and a solute-binding protein (CysP).

It is found in the cell inner membrane. The catalysed reaction is sulfate(out) + ATP + H2O = sulfate(in) + ADP + phosphate + H(+). It carries out the reaction thiosulfate(out) + ATP + H2O = thiosulfate(in) + ADP + phosphate + H(+). Its function is as follows. Part of the ABC transporter complex CysAWTP involved in sulfate/thiosulfate import. Responsible for energy coupling to the transport system. The polypeptide is Sulfate/thiosulfate import ATP-binding protein CysA (Escherichia coli O6:H1 (strain CFT073 / ATCC 700928 / UPEC)).